A 367-amino-acid polypeptide reads, in one-letter code: 4-hydroxy-3-methylbut-2-en-1-yl diphosphate synthase (flavodoxin) (367 aa).

Residues Cys265, Cys268, Cys300, and Glu307 each coordinate [4Fe-4S] cluster.

It belongs to the IspG family. [4Fe-4S] cluster serves as cofactor.

It carries out the reaction (2E)-4-hydroxy-3-methylbut-2-enyl diphosphate + oxidized [flavodoxin] + H2O + 2 H(+) = 2-C-methyl-D-erythritol 2,4-cyclic diphosphate + reduced [flavodoxin]. It participates in isoprenoid biosynthesis; isopentenyl diphosphate biosynthesis via DXP pathway; isopentenyl diphosphate from 1-deoxy-D-xylulose 5-phosphate: step 5/6. Converts 2C-methyl-D-erythritol 2,4-cyclodiphosphate (ME-2,4cPP) into 1-hydroxy-2-methyl-2-(E)-butenyl 4-diphosphate. This Bacillus anthracis protein is 4-hydroxy-3-methylbut-2-en-1-yl diphosphate synthase (flavodoxin).